Reading from the N-terminus, the 843-residue chain is Ribosome biogenesis protein ERB1 (843 aa).

Disordered stretches follow at residues 36 to 189 (KKAA…RYIY) and 364 to 419 (ADES…REYL). Acidic residues-rich tracts occupy residues 77–92 (VDED…YDLE), 106–139 (SDSE…EVPS), and 163–172 (ESNDLSDDNE). Residues 173 to 183 (PNYRIEKDANG) show a composition bias toward basic and acidic residues. The span at 379-396 (PKLPPPGYEESYHPPPEY) shows a compositional bias: pro residues. Over residues 397–406 (LPDKKEKEEW) the composition is skewed to basic and acidic residues. WD repeat units follow at residues 487-526 (GHRG…QLWS), 530-570 (SDED…LELE), 668-706 (KGGG…LVKI), 709-754 (PGAR…RPYK), 758-797 (YHQK…DLLS), and 813-843 (TGDL…RLWM).

The protein belongs to the WD repeat BOP1/ERB1 family. Component of the NOP7 complex, composed of ERB1, NOP7 and YTM1. The complex is held together by ERB1, which interacts with NOP7 via its N-terminal domain and with YTM1 via a high-affinity interaction between the seven-bladed beta-propeller domains of the 2 proteins. The NOP7 complex associates with the 66S pre-ribosome.

The protein localises to the nucleus. Its subcellular location is the nucleolus. The protein resides in the nucleoplasm. Functionally, component of the NOP7 complex, which is required for maturation of the 25S and 5.8S ribosomal RNAs and formation of the 60S ribosome. In Coccidioides immitis (strain RS) (Valley fever fungus), this protein is Ribosome biogenesis protein ERB1.